The following is a 356-amino-acid chain: UDP-N-acetylglucosamine--N-acetylmuramyl-(pentapeptide) pyrophosphoryl-undecaprenol N-acetylglucosamine transferase (356 aa).

3 residues coordinate UDP-N-acetyl-alpha-D-glucosamine: Arg166, Ser196, and Gln290.

It belongs to the glycosyltransferase 28 family. MurG subfamily.

The protein resides in the cell membrane. The enzyme catalyses Mur2Ac(oyl-L-Ala-gamma-D-Glu-L-Lys-D-Ala-D-Ala)-di-trans,octa-cis-undecaprenyl diphosphate + UDP-N-acetyl-alpha-D-glucosamine = beta-D-GlcNAc-(1-&gt;4)-Mur2Ac(oyl-L-Ala-gamma-D-Glu-L-Lys-D-Ala-D-Ala)-di-trans,octa-cis-undecaprenyl diphosphate + UDP + H(+). It functions in the pathway cell wall biogenesis; peptidoglycan biosynthesis. Cell wall formation. Catalyzes the transfer of a GlcNAc subunit on undecaprenyl-pyrophosphoryl-MurNAc-pentapeptide (lipid intermediate I) to form undecaprenyl-pyrophosphoryl-MurNAc-(pentapeptide)GlcNAc (lipid intermediate II). The polypeptide is UDP-N-acetylglucosamine--N-acetylmuramyl-(pentapeptide) pyrophosphoryl-undecaprenol N-acetylglucosamine transferase (Staphylococcus aureus (strain MW2)).